A 251-amino-acid polypeptide reads, in one-letter code: Probable-ribose 5-phosphate isomerase (251 aa).

The protein belongs to the ribose 5-phosphate isomerase family.

The catalysed reaction is aldehydo-D-ribose 5-phosphate = D-ribulose 5-phosphate. It functions in the pathway carbohydrate degradation; pentose phosphate pathway; D-ribose 5-phosphate from D-ribulose 5-phosphate (non-oxidative stage): step 1/1. This Caenorhabditis elegans protein is Probable-ribose 5-phosphate isomerase (rpia-1).